Here is a 375-residue protein sequence, read N- to C-terminus: Glycogen synthase kinase-3 homolog YGK3 (375 aa).

Residues 41 to 329 enclose the Protein kinase domain; that stretch reads VREGKRIGHG…ARQLMAHEFF (289 aa). ATP is bound by residues 47–55 and Lys74; that span reads IGHGSFGTV. The Proton acceptor role is filled by Asp173. Ser211 bears the Phosphoserine mark.

This sequence belongs to the protein kinase superfamily. Ser/Thr protein kinase family.

The catalysed reaction is L-seryl-[protein] + ATP = O-phospho-L-seryl-[protein] + ADP + H(+). It carries out the reaction L-threonyl-[protein] + ATP = O-phospho-L-threonyl-[protein] + ADP + H(+). Required for heat stress-instigated phosphorylation of BCY1 which is involved in cell wall integrity signaling. Regulates activity of MSN2, a transcription factor that binds to the stress-response element (STRE). Probably promotes formation of a complex between MSN2 and DNA. Regulates the stability of ROG1. This Saccharomyces cerevisiae (strain ATCC 204508 / S288c) (Baker's yeast) protein is Glycogen synthase kinase-3 homolog YGK3 (YGK3).